Here is a 218-residue protein sequence, read N- to C-terminus: Guanylate kinase (218 aa).

In terms of domain architecture, Guanylate kinase-like spans 5-188 (GNLFILSAPS…ALLDLTTIVN (184 aa)). 12–19 (APSGAGKS) contributes to the ATP binding site.

The protein belongs to the guanylate kinase family.

Its subcellular location is the cytoplasm. It carries out the reaction GMP + ATP = GDP + ADP. In terms of biological role, essential for recycling GMP and indirectly, cGMP. The polypeptide is Guanylate kinase (Colwellia psychrerythraea (strain 34H / ATCC BAA-681) (Vibrio psychroerythus)).